Here is a 461-residue protein sequence, read N- to C-terminus: Sensor histidine kinase MctS (461 aa).

Transmembrane regions (helical) follow at residues 7–27 (IIAL…TFIT) and 203–223 (FVIV…TCML). His259 carries the post-translational modification Phosphohistidine; by autocatalysis. The 91-residue stretch at 360–450 (LYRVAQEAFN…TLTAMMPKSA (91 aa)) folds into the Histidine kinase domain.

The protein resides in the cell membrane. It catalyses the reaction ATP + protein L-histidine = ADP + protein N-phospho-L-histidine.. In terms of biological role, member of the two-component regulatory system MctS/MctR, which activates mctP expression. The polypeptide is Sensor histidine kinase MctS (Rhizobium johnstonii (strain DSM 114642 / LMG 32736 / 3841) (Rhizobium leguminosarum bv. viciae)).